The primary structure comprises 382 residues: Cytochrome b (382 aa).

4 consecutive transmembrane segments (helical) span residues 33–53, 77–98, 113–133, and 178–198; these read FGSL…FLAM, WLVR…YTHI, WTVG…GYVL, and FFAF…IHLL. The heme b site is built by His83 and His97. Residues His182 and His196 each coordinate heme b. His201 is a binding site for a ubiquinone. 4 helical membrane-spanning segments follow: residues 226–246, 288–308, 320–340, and 347–367; these read LKDL…ALLT, LGGV…PFLQ, LTQL…WIGG, and FVSI…IIIP.

The protein belongs to the cytochrome b family. As to quaternary structure, the cytochrome bc1 complex contains 3 respiratory subunits (MT-CYB, CYC1 and UQCRFS1), 2 core proteins (UQCRC1 and UQCRC2) and probably 6 low-molecular weight proteins. It depends on heme b as a cofactor.

It is found in the mitochondrion inner membrane. Its function is as follows. Component of the ubiquinol-cytochrome c reductase complex (complex III or cytochrome b-c1 complex) that is part of the mitochondrial respiratory chain. The b-c1 complex mediates electron transfer from ubiquinol to cytochrome c. Contributes to the generation of a proton gradient across the mitochondrial membrane that is then used for ATP synthesis. The polypeptide is Cytochrome b (mt-cyb) (Sigmops gracilis (Slender fangjaw)).